The following is a 338-amino-acid chain: Egl nine homolog 1 (338 aa).

A compositionally biased stretch (low complexity) spans 1–11 (PRAQPAPAQPR). Residues 1–99 (PRAQPAPAQP…PSGGLRPNGQ (99 aa)) are disordered. Ser52 carries the post-translational modification Phosphoserine. An S-nitrosocysteine mark is found at Cys116 and Cys123. Residues 156-166 (VSQKSDSSKDI) are beta(2)beta(3) 'finger-like' loop. The Fe2OG dioxygenase domain maps to 209-307 (GRTKAMVACY…RYAITVWYFD (99 aa)). Cys217 carries the post-translational modification S-nitrosocysteine. Fe cation is bound by residues His228 and Asp230. S-nitrosocysteine occurs at positions 238 and 241. Residue His289 coordinates Fe cation. A 2-oxoglutarate-binding site is contributed by Arg298.

As to quaternary structure, monomer. Interacts with ING4; the interaction inhibits the hydroxylation of HIF alpha proteins. Interacts with PTGES3 (via PXLE motif); thereby recruiting EGLN1 to the HSP90 pathway to facilitate HIF alpha proteins hydroxylation. Interacts with LIMD1. Found in a complex composed of LIMD1, VHL, EGLN1/PHD2, ELOB and CUL2. Interacts with EPAS1. Interacts with CBFA2T3 and HIF1A. Fe(2+) serves as cofactor. Requires L-ascorbate as cofactor. S-nitrosylation inhibits the enzyme activity up to 60% under aerobic conditions. Chelation of Fe(2+) has no effect on the S-nitrosylation. It is uncertain whether nitrosylation occurs on Cys-238 or Cys-241. As to expression, expressed in heart, liver, kidney, brain, liver and testis. Highest levels in heart, lowest in liver.

It is found in the cytoplasm. The protein localises to the nucleus. It carries out the reaction L-prolyl-[hypoxia-inducible factor alpha subunit] + 2-oxoglutarate + O2 = trans-4-hydroxy-L-prolyl-[hypoxia-inducible factor alpha subunit] + succinate + CO2. Increased activation in hypoxia. Hydroxylation of the C-terminal ODD domain (CODD) proline of HIF1A is activated by cyclosporin A (CsA). Its function is as follows. Cellular oxygen sensor that catalyzes, under normoxic conditions, the post-translational formation of 4-hydroxyproline in hypoxia-inducible factor (HIF) alpha proteins. Hydroxylates a specific proline found in each of the oxygen-dependent degradation (ODD) domains (N-terminal, NODD, and C-terminal, CODD) of HIF1A. Also hydroxylates HIF2A. Has a preference for the CODD site for both HIF1A and HIF1B. Hydroxylated HIFs are then targeted for proteasomal degradation via the von Hippel-Lindau ubiquitination complex. Under hypoxic conditions, the hydroxylation reaction is attenuated allowing HIFs to escape degradation resulting in their translocation to the nucleus, heterodimerization with HIF1B, and increased expression of hypoxy-inducible genes. EGLN1 is the most important isozyme under normoxia and, through regulating the stability of HIF1, involved in various hypoxia-influenced processes such as angiogenesis in retinal and cardiac functionality. Target proteins are preferentially recognized via a LXXLAP motif. This chain is Egl nine homolog 1 (Egln1), found in Rattus norvegicus (Rat).